The chain runs to 612 residues: Dihydroxy-acid dehydratase (612 aa).

Asp-81 lines the Mg(2+) pocket. Cys-122 lines the [2Fe-2S] cluster pocket. 2 residues coordinate Mg(2+): Asp-123 and Lys-124. Lys-124 bears the N6-carboxylysine mark. Cys-195 contacts [2Fe-2S] cluster. Residue Glu-491 participates in Mg(2+) binding. Ser-517 functions as the Proton acceptor in the catalytic mechanism.

It belongs to the IlvD/Edd family. Homodimer. It depends on [2Fe-2S] cluster as a cofactor. Mg(2+) is required as a cofactor.

It carries out the reaction (2R)-2,3-dihydroxy-3-methylbutanoate = 3-methyl-2-oxobutanoate + H2O. The enzyme catalyses (2R,3R)-2,3-dihydroxy-3-methylpentanoate = (S)-3-methyl-2-oxopentanoate + H2O. The protein operates within amino-acid biosynthesis; L-isoleucine biosynthesis; L-isoleucine from 2-oxobutanoate: step 3/4. It functions in the pathway amino-acid biosynthesis; L-valine biosynthesis; L-valine from pyruvate: step 3/4. Functionally, functions in the biosynthesis of branched-chain amino acids. Catalyzes the dehydration of (2R,3R)-2,3-dihydroxy-3-methylpentanoate (2,3-dihydroxy-3-methylvalerate) into 2-oxo-3-methylpentanoate (2-oxo-3-methylvalerate) and of (2R)-2,3-dihydroxy-3-methylbutanoate (2,3-dihydroxyisovalerate) into 2-oxo-3-methylbutanoate (2-oxoisovalerate), the penultimate precursor to L-isoleucine and L-valine, respectively. The chain is Dihydroxy-acid dehydratase from Haemophilus influenzae (strain PittGG).